A 71-amino-acid chain; its full sequence is MAKWILLIVALLVLGHVPSGSTEFKRCWNGQGACRTYCTRQEKFIHLCPDASLCCLSYSLKASPHSRAGGV.

An N-terminal signal peptide occupies residues 1–22 (MAKWILLIVALLVLGHVPSGST). Cystine bridges form between C27–C54, C34–C48, and C38–C55.

Belongs to the beta-defensin family.

It is found in the secreted. Functionally, has antibacterial activity. This is Beta-defensin 25 (Defb25) from Rattus norvegicus (Rat).